Consider the following 91-residue polypeptide: Probable Fe(2+)-trafficking protein (91 aa).

It belongs to the Fe(2+)-trafficking protein family.

Functionally, could be a mediator in iron transactions between iron acquisition and iron-requiring processes, such as synthesis and/or repair of Fe-S clusters in biosynthetic enzymes. The sequence is that of Probable Fe(2+)-trafficking protein from Tolumonas auensis (strain DSM 9187 / NBRC 110442 / TA 4).